A 263-amino-acid chain; its full sequence is UDP-N-acetylenolpyruvoylglucosamine reductase (263 aa).

The active site involves Arg146. Ser188 functions as the Proton donor in the catalytic mechanism. Glu258 is a catalytic residue.

It belongs to the MurB family. FAD serves as cofactor.

Its subcellular location is the cytoplasm. It catalyses the reaction UDP-N-acetyl-alpha-D-muramate + NADP(+) = UDP-N-acetyl-3-O-(1-carboxyvinyl)-alpha-D-glucosamine + NADPH + H(+). It participates in cell wall biogenesis; peptidoglycan biosynthesis. In terms of biological role, cell wall formation. This Helicobacter hepaticus (strain ATCC 51449 / 3B1) protein is UDP-N-acetylenolpyruvoylglucosamine reductase.